Consider the following 391-residue polypeptide: Period circadian protein (391 aa).

Disordered regions lie at residues 27–121, 163–188, 241–270, and 328–357; these read VTAP…PPVT, MLEY…WEGE, GSSA…QFTQ, and SPSG…TSQA. Residues 93–114 are compositionally biased toward gly residues; sequence GTSGTGNSGDGGGGGGADGPGS. Residues 241–255 show a composition bias toward gly residues; sequence GSSAGGNGSGTGNNN.

In terms of assembly, forms a heterodimer with timeless (TIM); the complex then translocates into the nucleus. Phosphorylated with a circadian rhythmicity, probably by the double-time protein (dbt). Phosphorylation could be implicated in the stability of per monomer and in the formation of heterodimer per-tim.

The protein localises to the nucleus. It localises to the cytoplasm. It is found in the perinuclear region. Functionally, essential for biological clock functions. Determines the period length of circadian and ultradian rhythms; an increase in PER dosage leads to shortened circadian rhythms and a decrease leads to lengthened circadian rhythms. Essential for the circadian rhythmicity of locomotor activity, eclosion behavior, and for the rhythmic component of the male courtship song that originates in the thoracic nervous system. The biological cycle depends on the rhythmic formation and nuclear localization of the TIM-PER complex. Light induces the degradation of TIM, which promotes elimination of PER. Nuclear activity of the heterodimer coordinatively regulates PER and TIM transcription through a negative feedback loop. Behaves as a negative element in circadian transcriptional loop. Does not appear to bind DNA, suggesting indirect transcriptional inhibition. The chain is Period circadian protein (per) from Drosophila insularis (Fruit fly).